The sequence spans 157 residues: Transcription inhibitor protein Gfh1 (157 aa).

The stretch at 1-74 forms a coiled coil; the sequence is MAREVKLTKA…LEDVLSRAVI (74 aa).

This sequence belongs to the GreA/GreB family. Interacts with RNAP.

Its function is as follows. Inhibits all catalytic activities of RNA polymerase (RNAP) by partially occluding its substrate-binding site and preventing NTP binding. This Thermus aquaticus protein is Transcription inhibitor protein Gfh1 (gfh1).